We begin with the raw amino-acid sequence, 130 residues long: General stress protein 13 (130 aa).

Positions 8–77 (GSVYTGKVTG…EKGKISLSIR (70 aa)) constitute an S1 motif domain. Residues 76 to 109 (IRATQAAPEKKESKPRKPKAAQVSEEASTPQGFN) are disordered. The segment covering 100–109 (EEASTPQGFN) has biased composition (polar residues).

In terms of assembly, found in association with the 30S subunit of the ribosome.

It is found in the cytoplasm. The protein is General stress protein 13 (yugI) of Bacillus subtilis (strain 168).